Here is a 72-residue protein sequence, read N- to C-terminus: SRY-related protein ADW2 (72 aa).

Positions 1-69 (VKRPMNAFMV…KHMADYADYK (69 aa)) form a DNA-binding region, HMG box.

The protein resides in the nucleus. The sequence is that of SRY-related protein ADW2 from Alligator mississippiensis (American alligator).